The primary structure comprises 291 residues: Phosphoribosylaminoimidazole-succinocarboxamide synthase (291 aa).

It belongs to the SAICAR synthetase family.

It carries out the reaction 5-amino-1-(5-phospho-D-ribosyl)imidazole-4-carboxylate + L-aspartate + ATP = (2S)-2-[5-amino-1-(5-phospho-beta-D-ribosyl)imidazole-4-carboxamido]succinate + ADP + phosphate + 2 H(+). The protein operates within purine metabolism; IMP biosynthesis via de novo pathway; 5-amino-1-(5-phospho-D-ribosyl)imidazole-4-carboxamide from 5-amino-1-(5-phospho-D-ribosyl)imidazole-4-carboxylate: step 1/2. This is Phosphoribosylaminoimidazole-succinocarboxamide synthase (ADE1) from Candida albicans (Yeast).